Consider the following 214-residue polypeptide: Adenylate kinase (214 aa).

10 to 15 (GAGKGT) contributes to the ATP binding site. The interval 30–59 (STGDMLRAAIKAGTELGLEAKRVMDEGKLV) is NMP. AMP contacts are provided by residues Thr31, Arg36, 57–59 (KLV), 85–88 (GFPR), and Gln92. The tract at residues 122–159 (GRRVHPASGRVYHVVYNPPKVEGKDNETGDDLIVRDDD) is LID. Residues Arg123 and 132–133 (VY) contribute to the ATP site. Positions 156 and 167 each coordinate AMP. Arg200 contacts ATP.

The protein belongs to the adenylate kinase family. As to quaternary structure, monomer.

It localises to the cytoplasm. The enzyme catalyses AMP + ATP = 2 ADP. It participates in purine metabolism; AMP biosynthesis via salvage pathway; AMP from ADP: step 1/1. Its function is as follows. Catalyzes the reversible transfer of the terminal phosphate group between ATP and AMP. Plays an important role in cellular energy homeostasis and in adenine nucleotide metabolism. The chain is Adenylate kinase from Alteromonas mediterranea (strain DSM 17117 / CIP 110805 / LMG 28347 / Deep ecotype).